We begin with the raw amino-acid sequence, 456 residues long: Putative F-box/LRR-repeat protein At5g02700 (456 aa).

The F-box domain occupies 26-72; sequence ADFINYMPDDILHHILSFIPTDLAMRTSVLSRRWRHVWCETPCLDIT. LRR repeat units follow at residues 126 to 154, 177 to 202, 206 to 224, 271 to 300, and 330 to 355; these read VRDF…DVTL, FCQI…TLDT, LERL…DINQ, LSPL…TVGE, and FVRS…RPST.

In Arabidopsis thaliana (Mouse-ear cress), this protein is Putative F-box/LRR-repeat protein At5g02700.